The sequence spans 206 residues: Probable NAD(+) phosphorylase Rv3189 (206 aa).

This sequence belongs to the MbcT/ParT/Res family. Forms a heterotetramer with cognate antitoxin Rv3188.

The enzyme catalyses phosphate + NAD(+) = ADP-alpha-D-ribose 1''-phosphate + nicotinamide + H(+). Probable toxic component of a type II toxin-antitoxin (TA) system. Degrades NAD(+) by phosphorolysis. Neutralized by its cognate antitoxin Rv3188. The protein is Probable NAD(+) phosphorylase Rv3189 of Mycobacterium tuberculosis (strain ATCC 25618 / H37Rv).